Consider the following 264-residue polypeptide: S-adenosylmethionine decarboxylase proenzyme (264 aa).

The active-site Schiff-base intermediate with substrate; via pyruvic acid is Ser-112. Position 112 is a pyruvic acid (Ser); by autocatalysis (Ser-112). Catalysis depends on His-117, which acts as the Proton acceptor; for processing activity. Residue Cys-140 is the Proton donor; for catalytic activity of the active site.

The protein belongs to the prokaryotic AdoMetDC family. Type 2 subfamily. As to quaternary structure, heterooctamer of four alpha and four beta chains arranged as a tetramer of alpha/beta heterodimers. Requires pyruvate as cofactor. Post-translationally, is synthesized initially as an inactive proenzyme. Formation of the active enzyme involves a self-maturation process in which the active site pyruvoyl group is generated from an internal serine residue via an autocatalytic post-translational modification. Two non-identical subunits are generated from the proenzyme in this reaction, and the pyruvate is formed at the N-terminus of the alpha chain, which is derived from the carboxyl end of the proenzyme. The post-translation cleavage follows an unusual pathway, termed non-hydrolytic serinolysis, in which the side chain hydroxyl group of the serine supplies its oxygen atom to form the C-terminus of the beta chain, while the remainder of the serine residue undergoes an oxidative deamination to produce ammonia and the pyruvoyl group blocking the N-terminus of the alpha chain.

The enzyme catalyses S-adenosyl-L-methionine + H(+) = S-adenosyl 3-(methylsulfanyl)propylamine + CO2. Its pathway is amine and polyamine biosynthesis; S-adenosylmethioninamine biosynthesis; S-adenosylmethioninamine from S-adenosyl-L-methionine: step 1/1. In terms of biological role, catalyzes the decarboxylation of S-adenosylmethionine to S-adenosylmethioninamine (dcAdoMet), the propylamine donor required for the synthesis of the polyamines spermine and spermidine from the diamine putrescine. The protein is S-adenosylmethionine decarboxylase proenzyme of Serratia proteamaculans (strain 568).